We begin with the raw amino-acid sequence, 372 residues long: Nickel transporter NicT (372 aa).

A run of 8 helical transmembrane segments spans residues 30 to 50, 55 to 75, 104 to 124, 152 to 172, 218 to 238, 245 to 265, 294 to 314, and 335 to 355; these read LMFAVIVALHLVGWLTVTLLV, LSLGGKAFGIGVGLTAYTLGL, VGFFFSLGHSTVVFGLAVMLV, ISGAFLYLIGILNVIVLVGIV, VGFLFGLGFDTATEIALLVLA, GLPWYAILCLPVLFAAGMCLL, VTGLSVAVALLIGSVELLGLI, and TVGFVVVAMFALTWAIALLVW.

This sequence belongs to the NiCoT transporter (TC 2.A.52) family.

It is found in the cell membrane. It catalyses the reaction Ni(2+)(in) = Ni(2+)(out). Export of the fluoroquinolone antibiotic norfloxacin is inhibited by the proton ionophore carbonyl cyanide m-chlorophenylhydrazone (CCCP). Nickel may influence the extrusion of antibiotics possibly by facilitating the proton motive force-dependent efflux process. Functionally, involved in nickel uptake. In addition, acts as a drug efflux pump and contributes to moderate tolerance towards different classes of antibiotics, including fluoroquinolones, aminoglycosides and the anti-TB drug isoniazid, with a preference for fluoroquinolones. The drug efflux function is probably dependent on proton motive force (pmf) or ion gradient, and might be facilitated by the presence of Ni(2+) ions. The protein is Nickel transporter NicT of Mycobacterium tuberculosis (strain ATCC 25618 / H37Rv).